Here is a 1168-residue protein sequence, read N- to C-terminus: Probable pre-mRNA-splicing factor ATP-dependent RNA helicase DEAH5 (1168 aa).

Positions 76-206 (IYPPKPKSEK…KDEYVEEDKG (131 aa)) are disordered. Basic and acidic residues-rich tracts occupy residues 81–172 (PKSE…DRRS) and 180–206 (GRGDGGEGEDRRRDRRAKDEYVEEDKG). The region spanning 214–283 (YQVYKGRVTR…SSDKYSLSMR (70 aa)) is the S1 motif domain. Residues 289–326 (TGRDLIPLRKPSDEDDSSRSNPSYRTKDGQVTKTGISG) are disordered. Ser-411 bears the Phosphoserine mark. A Helicase ATP-binding domain is found at 525-688 (IQAVHDNQVL…FFNCNIFTIP (164 aa)). 538–545 (GETGSGKT) provides a ligand contact to ATP. The DEAH box signature appears at 635–638 (DEAH). Residues 706-886 (YLDAALITVL…MTTLTMKAMG (181 aa)) form the Helicase C-terminal domain.

The protein belongs to the DEAD box helicase family. DEAH subfamily. PRP22 sub-subfamily.

The protein localises to the nucleus. The enzyme catalyses ATP + H2O = ADP + phosphate + H(+). Functionally, may be involved in pre-mRNA splicing. In Arabidopsis thaliana (Mouse-ear cress), this protein is Probable pre-mRNA-splicing factor ATP-dependent RNA helicase DEAH5.